The chain runs to 855 residues: MICAL-like protein 1 (855 aa).

Positions 2–108 (AGPRGALLAW…YVSQYYNHFT (107 aa)) constitute a Calponin-homology (CH) domain. Disordered stretches follow at residues 110–165 (SGQA…SSAC), 226–253 (GRSG…EDSD), and 269–659 (QASS…HGFP). The span at 124-135 (PAAPSPTSTSPA) shows a compositional bias: low complexity. Residues 163–226 (SACAACGQRV…ERCTRLGLGG (64 aa)) enclose the LIM zinc-binding domain. Positions 269-278 (QASSEVQPHT) are enriched in polar residues. Ser293 and Ser307 each carry phosphoserine. The segment covering 308–325 (ESSALTPPTPRPRSSLQQ) has biased composition (polar residues). Residues Thr313 and Thr316 each carry the phosphothreonine modification. Over residues 356–367 (LSERMTAPRKDP) the composition is skewed to basic and acidic residues. The NPF1 signature appears at 423 to 425 (NPF). Positions 425 to 434 (FEEEEEEEEA) are enriched in acidic residues. A compositionally biased stretch (pro residues) spans 439-449 (VPSPAPAPPET). Residues Thr461 and Thr463 each carry the phosphothreonine modification. Residues Ser464, Ser465, Ser478, and Ser480 each carry the phosphoserine modification. Residues 499–514 (PSPALSVESLSSESSS) are compositionally biased toward low complexity. Residues 542–554 (PGTSANSVTPSAH) show a composition bias toward polar residues. A compositionally biased stretch (low complexity) spans 555–570 (SSLSSSGELGQPSGEQ). The residue at position 613 (Ser613) is a Phosphoserine. Residues 625-627 (NPF) carry the NPF2 motif. A mediates the interaction with RAB13 and intramolecular interaction with the calponin-homology (CH) domain region spans residues 644–855 (KGAKPVRPPA…AKSKAPTGKS (212 aa)). The region spanning 663-810 (RKVQADQYIP…EEEEDKMLET (148 aa)) is the bMERB domain. Residues 679-703 (EMDSIERQLDALEHSGVLLEEKLRG) are a coiled coil. A phosphoserine mark is found at Ser682 and Ser732. Positions 692–855 (HSGVLLEEKL…AKSKAPTGKS (164 aa)) are necessary and sufficient to associate with tubular recycling endosome membranes, mediate phosphatidic acid-binding and membrane tubulation. A coiled-coil region spans residues 794–822 (LDEDRQREEEEDKMLETMIKKKDFQREAE). Basic and acidic residues predominate over residues 815 to 826 (KDFQREAESDSK). A disordered region spans residues 815–855 (KDFQREAESDSKKKGKFKTMKVLKLLGNKRDAKSKAPTGKS).

As to quaternary structure, homooligomer. Interacts (via NPF1 motif) with EHD1 (via EH domain); the interaction is direct and probably recruits EHD1 to membranes. Interacts with EHD3 (via EH domain). Interacts with RAB35 (GTP-bound form); the interaction is direct and probably recruits MICALL1 to membranes. Interacts with ACAP2; the interaction is indirect through RAB35. Interacts with RAB8A (GTP-bound form); regulates RAB8A association with recycling endosomes. Interacts with RAB13 (GTP-bound form). Interacts with ARF6 (GTP-bound form). Interacts with PACSIN2 (via the SH3 domain). Interacts with DPYSL2.

It localises to the recycling endosome membrane. Its subcellular location is the late endosome membrane. It is found in the cell projection. The protein resides in the cilium membrane. The protein localises to the cytoplasm. It localises to the cytoskeleton. Its subcellular location is the microtubule organizing center. It is found in the centrosome. The protein resides in the centriole. Functionally, lipid-binding protein with higher affinity for phosphatidic acid, a lipid enriched in recycling endosome membranes. On endosome membranes, acts as a downstream effector of Rab proteins recruiting cytosolic proteins to regulate membrane tubulation. Involved in a late step of receptor-mediated endocytosis regulating for instance endocytosed-EGF receptor trafficking. Alternatively, regulates slow endocytic recycling of endocytosed proteins back to the plasma membrane. Also involved in cargo protein delivery to the plasma membrane. Plays a role in ciliogenesis coordination, recruits EHD1 to primary cilium where it is anchored to the centriole through interaction with tubulins. May indirectly play a role in neurite outgrowth. The polypeptide is MICAL-like protein 1 (Micall1) (Rattus norvegicus (Rat)).